The chain runs to 337 residues: Holliday junction branch migration complex subunit RuvB (337 aa).

The tract at residues 4–186 is large ATPase domain (RuvB-L); sequence ADRLIAADNP…FGIVQRLEYY (183 aa). Residues Ile-25, Arg-26, Gly-67, Lys-70, Thr-71, Thr-72, 133–135, Arg-176, Tyr-186, and Arg-223 contribute to the ATP site; that span reads EDY. Residue Thr-71 coordinates Mg(2+). Residues 187 to 257 form a small ATPAse domain (RuvB-S) region; sequence KVDDLQYIVQ…IADKALNMLD (71 aa). Positions 260 to 337 are head domain (RuvB-H); sequence VCGFDYMDRK…LHFGIDRPDK (78 aa). DNA contacts are provided by Arg-315 and Arg-320.

It belongs to the RuvB family. Homohexamer. Forms an RuvA(8)-RuvB(12)-Holliday junction (HJ) complex. HJ DNA is sandwiched between 2 RuvA tetramers; dsDNA enters through RuvA and exits via RuvB. An RuvB hexamer assembles on each DNA strand where it exits the tetramer. Each RuvB hexamer is contacted by two RuvA subunits (via domain III) on 2 adjacent RuvB subunits; this complex drives branch migration. In the full resolvosome a probable DNA-RuvA(4)-RuvB(12)-RuvC(2) complex forms which resolves the HJ.

Its subcellular location is the cytoplasm. It carries out the reaction ATP + H2O = ADP + phosphate + H(+). In terms of biological role, the RuvA-RuvB-RuvC complex processes Holliday junction (HJ) DNA during genetic recombination and DNA repair, while the RuvA-RuvB complex plays an important role in the rescue of blocked DNA replication forks via replication fork reversal (RFR). RuvA specifically binds to HJ cruciform DNA, conferring on it an open structure. The RuvB hexamer acts as an ATP-dependent pump, pulling dsDNA into and through the RuvAB complex. RuvB forms 2 homohexamers on either side of HJ DNA bound by 1 or 2 RuvA tetramers; 4 subunits per hexamer contact DNA at a time. Coordinated motions by a converter formed by DNA-disengaged RuvB subunits stimulates ATP hydrolysis and nucleotide exchange. Immobilization of the converter enables RuvB to convert the ATP-contained energy into a lever motion, pulling 2 nucleotides of DNA out of the RuvA tetramer per ATP hydrolyzed, thus driving DNA branch migration. The RuvB motors rotate together with the DNA substrate, which together with the progressing nucleotide cycle form the mechanistic basis for DNA recombination by continuous HJ branch migration. Branch migration allows RuvC to scan DNA until it finds its consensus sequence, where it cleaves and resolves cruciform DNA. The sequence is that of Holliday junction branch migration complex subunit RuvB from Aliivibrio salmonicida (strain LFI1238) (Vibrio salmonicida (strain LFI1238)).